The chain runs to 237 residues: Immunoglobulin superfamily member 6 (237 aa).

The first 27 residues, 1 to 27 (MGPVSARRSRLRPEISLILFQVGMVGA), serve as a signal peptide directing secretion. Residues 28 to 152 (CTVYVLQPGY…ERLFSKEVRS (125 aa)) are Extracellular-facing. Positions 30–134 (VYVLQPGYLE…ELSPSAKHVG (105 aa)) constitute an Ig-like C2-type domain. Cys51 and Cys118 are disulfide-bonded. The chain crosses the membrane as a helical span at residues 153–173 (FLIVLLALLSVYITGVCVTFI). The Cytoplasmic segment spans residues 174–237 (VLFKSKSNGP…RKALPNPGRA (64 aa)). The span at 215–229 (TSHLPEQEGTDENRK) shows a compositional bias: basic and acidic residues. Residues 215–237 (TSHLPEQEGTDENRKALPNPGRA) are disordered.

As to expression, ubiquitous with higher expression in immune tissue.

Its subcellular location is the membrane. This is Immunoglobulin superfamily member 6 (Igsf6) from Mus musculus (Mouse).